Here is a 1090-residue protein sequence, read N- to C-terminus: Aminopeptidase-like protein AC3.5 (1090 aa).

Over 1–77 (MEDVDLGKDR…KPKKRIACSP (77 aa)) the chain is Cytoplasmic. Positions 21 to 33 (GNGSASNLNNRNN) are enriched in low complexity. A disordered region spans residues 21–71 (GNGSASNLNNRNNIPLSEKAAKEPLQTQPQEAPPAPKPKVQKQKPPVKPKK). Residues 59–71 (KVQKQKPPVKPKK) are compositionally biased toward basic residues. The chain crosses the membrane as a helical; Signal-anchor for type II membrane protein span at residues 78–98 (GSAICLFLLAVAAIIFAAFLG). The Lumenal portion of the chain corresponds to 99–1090 (HYLTKQNYEM…DEMESSEEQE (992 aa)). Asn-115, Asn-123, Asn-143, Asn-176, and Asn-230 each carry an N-linked (GlcNAc...) asparagine glycan. Residues 217 to 259 (VTKRAKKSVDSGTNSTSEMPEGSGEEAMATTATTTTTESTTPV) form a disordered region. Low complexity predominate over residues 241 to 257 (EEAMATTATTTTTESTT). Residues Asn-402, Asn-710, Asn-723, Asn-789, Asn-894, Asn-919, Asn-964, and Asn-993 are each glycosylated (N-linked (GlcNAc...) asparagine). Residues 1069-1080 (YLDGKMKGPAKD) show a composition bias toward basic and acidic residues. Residues 1069-1090 (YLDGKMKGPAKDDEMESSEEQE) form a disordered region. Over residues 1081–1090 (DEMESSEEQE) the composition is skewed to acidic residues.

This sequence belongs to the peptidase M1 family.

The protein localises to the membrane. The polypeptide is Aminopeptidase-like protein AC3.5 (Caenorhabditis elegans).